Consider the following 394-residue polypeptide: Phosphoglycerate kinase (394 aa).

Substrate-binding positions include 21–23 (DFN), R36, 59–62 (HLGR), R118, and R151. At S183 the chain carries Phosphoserine. ATP contacts are provided by K201 and G292. Residue T299 is modified to Phosphothreonine. Residues E323 and 350 to 353 (GGDS) contribute to the ATP site.

This sequence belongs to the phosphoglycerate kinase family. As to quaternary structure, monomer.

The protein localises to the cytoplasm. It catalyses the reaction (2R)-3-phosphoglycerate + ATP = (2R)-3-phospho-glyceroyl phosphate + ADP. The protein operates within carbohydrate degradation; glycolysis; pyruvate from D-glyceraldehyde 3-phosphate: step 2/5. The sequence is that of Phosphoglycerate kinase (pgk) from Priestia megaterium (strain DSM 319 / IMG 1521) (Bacillus megaterium).